Here is a 177-residue protein sequence, read N- to C-terminus: ATP synthase subunit delta (177 aa).

Belongs to the ATPase delta chain family. F-type ATPases have 2 components, F(1) - the catalytic core - and F(0) - the membrane proton channel. F(1) has five subunits: alpha(3), beta(3), gamma(1), delta(1), epsilon(1). F(0) has three main subunits: a(1), b(2) and c(10-14). The alpha and beta chains form an alternating ring which encloses part of the gamma chain. F(1) is attached to F(0) by a central stalk formed by the gamma and epsilon chains, while a peripheral stalk is formed by the delta and b chains.

Its subcellular location is the cell inner membrane. F(1)F(0) ATP synthase produces ATP from ADP in the presence of a proton or sodium gradient. F-type ATPases consist of two structural domains, F(1) containing the extramembraneous catalytic core and F(0) containing the membrane proton channel, linked together by a central stalk and a peripheral stalk. During catalysis, ATP synthesis in the catalytic domain of F(1) is coupled via a rotary mechanism of the central stalk subunits to proton translocation. Functionally, this protein is part of the stalk that links CF(0) to CF(1). It either transmits conformational changes from CF(0) to CF(1) or is implicated in proton conduction. The protein is ATP synthase subunit delta of Yersinia enterocolitica serotype O:8 / biotype 1B (strain NCTC 13174 / 8081).